The following is a 212-amino-acid chain: Large ribosomal subunit protein uL3 (212 aa).

An N5-methylglutamine modification is found at glutamine 154.

The protein belongs to the universal ribosomal protein uL3 family. Part of the 50S ribosomal subunit. Forms a cluster with proteins L14 and L19. In terms of processing, methylated by PrmB.

One of the primary rRNA binding proteins, it binds directly near the 3'-end of the 23S rRNA, where it nucleates assembly of the 50S subunit. In Hydrogenovibrio crunogenus (strain DSM 25203 / XCL-2) (Thiomicrospira crunogena), this protein is Large ribosomal subunit protein uL3.